Here is a 393-residue protein sequence, read N- to C-terminus: MDLVEKLKNDVKEIEDWIIQIRRKIHENPELSYKEYSTSKLVAETLRKLGIEVEEGVGLPTAVVGKIRGNKPGKTVALRADMDALPVEETSDVEFKSKVKGVMHACGHDTHVAMLLGGAYLLVKNKDLISGEIRLIFQPAEEDGGLGGAKPMIEAGVMNGVDYVFGIHISSSYPSGVFATRKGPIMATPDAFKIVVHGKGGHGSAPHETIDPIFISLQIANAIYGITARQIDPVQPFVISITTIHSGTKDNIIPDDAEMQGTIRSLDENVRSKAKDYMRRIVSSICGIYGATCEVKFMEDVYPITVNNPEVTDEVMKILSSISTVVETEPVLGAEDFSRFLQKAPGMYFFLGTRNEKKGCIYPNHSSKFCVDEDVLKLGALAHALLAIKFSNK.

The Zn(2+) site is built by His-104, Asp-109, and His-245. Tyr-302 acts as the Proton donor in catalysis. Glu-373 serves as the catalytic Nucleophile.

This sequence belongs to the peptidase M20 family. As to quaternary structure, homotetramer. Zn(2+) is required as a cofactor.

Can release basic, acidic, aromatic, and, to a lesser extent, aliphatic amino acids. In Saccharolobus solfataricus (strain ATCC 35092 / DSM 1617 / JCM 11322 / P2) (Sulfolobus solfataricus), this protein is Thermostable carboxypeptidase 2 (cpsA2).